We begin with the raw amino-acid sequence, 161 residues long: Nuclear transcription factor Y subunit B-3 (161 aa).

The interval 1–23 (MADSDNDSGGHKDGGNASTREQD) is disordered. The residue at position 2 (Ala-2) is an N-acetylalanine. The segment covering 8–23 (SGGHKDGGNASTREQD) has biased composition (basic and acidic residues). Residues 26-32 (LPIANVS) mediate DNA binding. The tract at residues 53–64 (VQECVSEFISFI) is subunit association domain (SAD). Residues 114–146 (EKTTTAGRQGDKEGGGGGGGAGSGSGGAPMYGG) form a disordered region. Gly residues predominate over residues 128–146 (GGGGGGAGSGSGGAPMYGG).

This sequence belongs to the NFYB/HAP3 subunit family. Heterotrimeric transcription factor composed of three components, NF-YA, NF-YB and NF-YC. NF-YB and NF-YC must interact and dimerize for NF-YA association and DNA binding. Component of a heat stress-inducible transcriptional complex with NF-YA and NF-YB subunits made, at least, of NFYA2, NFYB3 and DPB3-1 in cooperation with DREB2A. Binds directly with DPB3-1. As to expression, ubiquitous. Expressed in seedlings, petioles, hypocotyls, reproductive organ tissues and leaves.

The protein resides in the nucleus. It is found in the cytoplasm. Its subcellular location is the cytosol. Its function is as follows. Component of the NF-Y/HAP transcription factor complex. The NF-Y complex stimulates the transcription of various genes by recognizing and binding to a CCAAT motif in promoters. Promotes the expression of heat stress-inducible genes by contributing to the formation of a heat stress-specific transcriptional complex with NF-Y subunits (e.g. DPB3-1, NF-YA2 and NF-YB3) and DREB2A at the promoter of target genes, thus promoting heat tolerance. The chain is Nuclear transcription factor Y subunit B-3 from Arabidopsis thaliana (Mouse-ear cress).